The primary structure comprises 524 residues: Vang-like protein 1 (524 aa).

Positions 1-15 (MDTESTYSGYSYYSS) are enriched in low complexity. The tract at residues 1-85 (MDTESTYSGY…TTAITGTSEH (85 aa)) is disordered. Residues 1–117 (MDTESTYSGY…KRYLGLTVAS (117 aa)) are Cytoplasmic-facing. Over residues 73 to 85 (GETTTAITGTSEH) the composition is skewed to polar residues. A phosphoserine mark is found at serine 86 and serine 88. A helical transmembrane segment spans residues 118–138 (FLGLLVFLTPIAFILLPPILW). The Extracellular segment spans residues 139-151 (RDELEPCGTICEG). A helical transmembrane segment spans residues 152 to 172 (LFISMAFKLLILLIGTWALFF). The Cytoplasmic segment spans residues 173 to 182 (RKRRADMPRV). Residues 183–203 (FVFRALLLVLIFLFVVSYWLF) traverse the membrane as a helical segment. The Extracellular segment spans residues 204–222 (YGVRILDSRDRNYQGIVQY). The chain crosses the membrane as a helical span at residues 223 to 243 (AVSLVDALLFIHYLAIVLLEL). Over 244 to 524 (RQLQPMFTLQ…VLRLQSETSV (281 aa)) the chain is Cytoplasmic.

The protein belongs to the Vang family. Heterodimer with VANGL2. Interacts through its C-terminal region with the N-terminal half of DVL1, DVL2 and DVL3. The PDZ domain of DVL1, DVL2 and DVL3 is required for the interaction. According to PubMed:11956595, ubiquitously expressed. According to PubMed:12011995, expressed specifically in testis and ovary.

It localises to the cell membrane. The polypeptide is Vang-like protein 1 (VANGL1) (Homo sapiens (Human)).